A 159-amino-acid polypeptide reads, in one-letter code: ATP synthase subunit b 2 (159 aa).

A helical transmembrane segment spans residues 1–21 (MDATFWAFIALVIFVAIVVYM).

It belongs to the ATPase B chain family. As to quaternary structure, F-type ATPases have 2 components, F(1) - the catalytic core - and F(0) - the membrane proton channel. F(1) has five subunits: alpha(3), beta(3), gamma(1), delta(1), epsilon(1). F(0) has three main subunits: a(1), b(2) and c(10-14). The alpha and beta chains form an alternating ring which encloses part of the gamma chain. F(1) is attached to F(0) by a central stalk formed by the gamma and epsilon chains, while a peripheral stalk is formed by the delta and b chains.

The protein localises to the cell inner membrane. F(1)F(0) ATP synthase produces ATP from ADP in the presence of a proton or sodium gradient. F-type ATPases consist of two structural domains, F(1) containing the extramembraneous catalytic core and F(0) containing the membrane proton channel, linked together by a central stalk and a peripheral stalk. During catalysis, ATP synthesis in the catalytic domain of F(1) is coupled via a rotary mechanism of the central stalk subunits to proton translocation. Functionally, component of the F(0) channel, it forms part of the peripheral stalk, linking F(1) to F(0). The polypeptide is ATP synthase subunit b 2 (Brucella suis (strain ATCC 23445 / NCTC 10510)).